Consider the following 3094-residue polypeptide: Replicase polyprotein 1ab (3094 aa).

Catalysis depends on for leader protease activity residues cysteine 509 and histidine 569. Positions 622-647 (ARSVEKDLIDFKDEIKSLSKEKRSVT) form a coiled coil. In terms of domain architecture, Alphavirus-like MT spans 670–857 (SFTHSVYSDH…HKLSNIKSIM (188 aa)). Low complexity predominate over residues 1807–1816 (DSESVSSDEV). The segment at 1807-1828 (DSESVSSDEVASNPRPGLHGGS) is disordered. One can recognise a (+)RNA virus helicase ATP-binding domain in the interval 2215-2387 (TQTNFVSANA…FVDDESRVYG (173 aa)). The region spanning 2388 to 2548 (EVSYRCPWDV…AYRVYPTSFG (161 aa)) is the (+)RNA virus helicase C-terminal domain. One can recognise a RdRp catalytic domain in the interval 2817 to 2930 (YNVGEIDFSK…FSESPIRNSA (114 aa)).

The leader protease is released by autoproteolysis.

The protein resides in the host cytoplasmic vesicle membrane. The enzyme catalyses RNA(n) + a ribonucleoside 5'-triphosphate = RNA(n+1) + diphosphate. It catalyses the reaction ATP + H2O = ADP + phosphate + H(+). In terms of biological role, L-pro is involved in systemic transport and in RNA amplification. Functionally, RNA-dependent RNA polymerase replicates the viral genome. In Beet yellows virus (isolate Ukraine) (BYV), this protein is Replicase polyprotein 1ab.